Here is a 396-residue protein sequence, read N- to C-terminus: Phosphoglycerate kinase (396 aa).

Substrate is bound by residues 22 to 24 (DLN), Arg-37, 60 to 63 (HFGR), Arg-118, and Arg-151. ATP contacts are provided by residues Lys-201, Glu-323, and 353–356 (GGDT).

Belongs to the phosphoglycerate kinase family. Monomer.

The protein localises to the cytoplasm. The enzyme catalyses (2R)-3-phosphoglycerate + ATP = (2R)-3-phospho-glyceroyl phosphate + ADP. It participates in carbohydrate degradation; glycolysis; pyruvate from D-glyceraldehyde 3-phosphate: step 2/5. The protein is Phosphoglycerate kinase of Xanthobacter autotrophicus (strain ATCC BAA-1158 / Py2).